The sequence spans 278 residues: Tryptophan synthase alpha chain (278 aa).

Catalysis depends on proton acceptor residues glutamate 49 and aspartate 60.

The protein belongs to the TrpA family. As to quaternary structure, tetramer of two alpha and two beta chains.

It carries out the reaction (1S,2R)-1-C-(indol-3-yl)glycerol 3-phosphate + L-serine = D-glyceraldehyde 3-phosphate + L-tryptophan + H2O. It participates in amino-acid biosynthesis; L-tryptophan biosynthesis; L-tryptophan from chorismate: step 5/5. Its function is as follows. The alpha subunit is responsible for the aldol cleavage of indoleglycerol phosphate to indole and glyceraldehyde 3-phosphate. This Rhodopirellula baltica (strain DSM 10527 / NCIMB 13988 / SH1) protein is Tryptophan synthase alpha chain.